The chain runs to 661 residues: CD180 antigen (661 aa).

The signal sequence occupies residues 1-23 (MAFDVSCFFWVVLFSAGCKVITS). The Extracellular portion of the chain corresponds to 24–626 (WDQMCIEKEA…KLSDVKLSCG (603 aa)). The 21-residue stretch at 33-53 (ANKTYNCENLGLSEIPDTLPN) folds into the LRRNT domain. N-linked (GlcNAc...) asparagine glycosylation is found at N34, N53, N70, and N78. LRR repeat units lie at residues 54–75 (TTEF…TFSR), 78–99 (NLTF…TFQS), 102–123 (QLST…SLNG), 126–147 (SLKH…PVHN), 150–171 (NLES…KDFP), 174–195 (NLKV…DMRS), and 201–221 (NLSL…AFDS). N-linked (GlcNAc...) asparagine glycosylation is found at N201, N234, and N244. LRR repeat units lie at residues 275-296 (SVES…TFQC), 299-320 (QLQE…MKGL), 322-343 (LLKK…SAAN), 346-366 (SLTH…VGCL), and 371-391 (NLQT…CSLQ). N-linked (GlcNAc...) asparagine glycans are attached at residues N394 and N402. 7 LRR repeats span residues 397-418 (HLQT…AFKE), 421-442 (QLEL…SPFQ), 446-466 (FLQV…HLLA), 470-493 (VLRH…NLLQ), 497-518 (SLEV…AFHS), 521-544 (KMSH…SHLK), and 546-564 (IYLN…RLLP). The N-linked (GlcNAc...) asparagine glycan is linked to N451. N573 carries an N-linked (GlcNAc...) asparagine glycan. Residues 577-627 (NPLDCTCSNIHFLTWYKENLHKLEGSEETTCANPPSLRGVKLSDVKLSCGI) form the LRRCT domain. The chain crosses the membrane as a helical span at residues 627 to 650 (ITAIGIFFLIVFLLLLAILLFFAV). Topologically, residues 651-661 (KYLLRWKYQHI) are cytoplasmic.

It belongs to the Toll-like receptor family. In terms of assembly, M-shaped tetramer of two CD180-LY86 heterodimers. Expressed mainly on mature peripherical B cells. Detected in spleen, lymph node and appendix. Not detected in pre-B and -T cells.

Its subcellular location is the cell membrane. Functionally, may cooperate with MD-1 and TLR4 to mediate the innate immune response to bacterial lipopolysaccharide (LPS) in B-cells. Leads to NF-kappa-B activation. Also involved in the life/death decision of B-cells. In Homo sapiens (Human), this protein is CD180 antigen (CD180).